Consider the following 223-residue polypeptide: Deoxyribose-phosphate aldolase (223 aa).

The active-site Proton donor/acceptor is aspartate 91. The active-site Schiff-base intermediate with acetaldehyde is lysine 154. Catalysis depends on lysine 183, which acts as the Proton donor/acceptor.

Belongs to the DeoC/FbaB aldolase family. DeoC type 1 subfamily.

Its subcellular location is the cytoplasm. The enzyme catalyses 2-deoxy-D-ribose 5-phosphate = D-glyceraldehyde 3-phosphate + acetaldehyde. It functions in the pathway carbohydrate degradation; 2-deoxy-D-ribose 1-phosphate degradation; D-glyceraldehyde 3-phosphate and acetaldehyde from 2-deoxy-alpha-D-ribose 1-phosphate: step 2/2. Functionally, catalyzes a reversible aldol reaction between acetaldehyde and D-glyceraldehyde 3-phosphate to generate 2-deoxy-D-ribose 5-phosphate. The polypeptide is Deoxyribose-phosphate aldolase (Geobacillus sp. (strain WCH70)).